The primary structure comprises 486 residues: ATP synthase subunit beta (486 aa).

A compositionally biased stretch (basic and acidic residues) spans 1 to 12 (MTTTAEKTDRPG). Positions 1-22 (MTTTAEKTDRPGKPGSSDTSGR) are disordered. 171 to 178 (GGAGVGKT) contacts ATP.

The protein belongs to the ATPase alpha/beta chains family. F-type ATPases have 2 components, CF(1) - the catalytic core - and CF(0) - the membrane proton channel. CF(1) has five subunits: alpha(3), beta(3), gamma(1), delta(1), epsilon(1). CF(0) has three main subunits: a(1), b(2) and c(9-12). The alpha and beta chains form an alternating ring which encloses part of the gamma chain. CF(1) is attached to CF(0) by a central stalk formed by the gamma and epsilon chains, while a peripheral stalk is formed by the delta and b chains.

It localises to the cell membrane. It catalyses the reaction ATP + H2O + 4 H(+)(in) = ADP + phosphate + 5 H(+)(out). Its function is as follows. Produces ATP from ADP in the presence of a proton gradient across the membrane. The catalytic sites are hosted primarily by the beta subunits. The protein is ATP synthase subunit beta of Mycobacterium tuberculosis (strain ATCC 25177 / H37Ra).